The primary structure comprises 354 residues: Src kinase-associated phosphoprotein 1 (354 aa).

A PH domain is found at 107–210 (NVIKQGYLEK…WVDQISFLLK (104 aa)). 2 positions are modified to phosphotyrosine: tyrosine 142 and tyrosine 236. 2 positions are modified to phosphotyrosine; by FYN: tyrosine 267 and tyrosine 290. Residues 285–290 (RRRVDY) are interaction with FYB1. The SH3 domain maps to 289 to 350 (DYADYYQGLW…PKDYLTTAFE (62 aa)).

This sequence belongs to the SKAP family. As to quaternary structure, homodimer. Interacts with FYN. Interacts with PTPRC. Interacts with GRB2 when phosphorylated on Tyr-267. Interacts with FYB1, which is required for SKAP2 protein stability. Part of a complex consisting of SKAP1, FYB1 and CLNK. Interacts with RASGRP1. Interacts with FYB2. Phosphorylated on tyrosines. Phosphorylation by FYN on Tyr-267 is required for GRB2 interaction. Phosphorylation by FYN on Tyr-290 abolishes interaction with FYB1. Tyr-236 is dephosphorylated by PTPRC. Expressed in mast cells (at protein level).

It localises to the cytoplasm. The protein resides in the nucleus. The protein localises to the cell membrane. In terms of biological role, positively regulates T-cell receptor signaling by enhancing the MAP kinase pathway. Required for optimal conjugation between T-cells and antigen-presenting cells by promoting the clustering of integrin ITGAL on the surface of T-cells. May be involved in high affinity immunoglobulin epsilon receptor signaling in mast cells. The protein is Src kinase-associated phosphoprotein 1 (Skap1) of Rattus norvegicus (Rat).